The chain runs to 457 residues: MEKKIDFKPDSYLIRSGNNFLGILNDIKRRPEDAANELGVSIEEINSIISGKQKISPSLIEKAVNIWPVNERDFYIVSDDCSSGILIMTSQDSIKSSRIMERAGKPYYEYRDTAMSKTAPFRPEWILELCKVENNDPENPKAQWNNGHFMHQFTYFIGEVNFYYKDPEGKKHVAIMNTGDSMYITPFTPHTFTTRDGASQNGLILALTYGSKLTGDIQQELSSLSLDCGSQYALDFTNHENASLSLLEYYFELSNLTKEKFAKRTNFSMETLADFFTKKKLPTFDELKIIAKALNVNSRDLMPNDLTESKVIVKTHDQCDHWKYPESGNYEFYELASTTALPHSKAFEIDVSSSEDLNLDLKVGLHQYVYNIGDSALTINWNYENKTYQKSLNPGDSAYIKPFVPHNFRGNGKILILRIGGKISGDSQRELSFVGRENTQRAISETMQWFDPKGSNS.

The HTH cro/C1-type 1 domain maps to 23–74 (ILNDIKRRPEDAANELGVSIEEINSIISGKQKISPSLIEKAVNIWPVNERDF). A DNA-binding region (H-T-H motif) is located at residues 32–50 (EDAANELGVSIEEINSIIS). Positions 148 and 190 each coordinate Fe cation. Positions 247 to 301 (LEYYFELSNLTKEKFAKRTNFSMETLADFFTKKKLPTFDELKIIAKALNVNSRDL) constitute an HTH cro/C1-type 2 domain. Positions 258-277 (KEKFAKRTNFSMETLADFFT) form a DNA-binding region, H-T-H motif.

This sequence belongs to the non-heme iron-dependent dioxygenase family. The cofactor is Fe(2+).

The enzyme catalyses 2-hydroxyethylphosphonate + O2 = methylphosphonate + hydrogencarbonate + H(+). It functions in the pathway phosphorus metabolism; phosphonate biosynthesis. In terms of biological role, catalyzes the conversion of 2-hydroxyethylphosphonate into methylphosphonate in the methylphosphonate biosynthesis pathway. This chain is Methylphosphonate synthase (mpnS), found in Nitrosopumilus maritimus (strain SCM1).